Consider the following 286-residue polypeptide: ATP synthase gamma chain (286 aa).

This sequence belongs to the ATPase gamma chain family. F-type ATPases have 2 components, CF(1) - the catalytic core - and CF(0) - the membrane proton channel. CF(1) has five subunits: alpha(3), beta(3), gamma(1), delta(1), epsilon(1). CF(0) has three main subunits: a, b and c.

The protein resides in the cell inner membrane. Functionally, produces ATP from ADP in the presence of a proton gradient across the membrane. The gamma chain is believed to be important in regulating ATPase activity and the flow of protons through the CF(0) complex. The polypeptide is ATP synthase gamma chain (Shewanella loihica (strain ATCC BAA-1088 / PV-4)).